Here is a 216-residue protein sequence, read N- to C-terminus: Uridine kinase (216 aa).

16–23 (GASASGKS) is a binding site for ATP.

It belongs to the uridine kinase family.

The protein localises to the cytoplasm. It carries out the reaction uridine + ATP = UMP + ADP + H(+). It catalyses the reaction cytidine + ATP = CMP + ADP + H(+). The protein operates within pyrimidine metabolism; CTP biosynthesis via salvage pathway; CTP from cytidine: step 1/3. It participates in pyrimidine metabolism; UMP biosynthesis via salvage pathway; UMP from uridine: step 1/1. This is Uridine kinase from Pasteurella multocida (strain Pm70).